The chain runs to 500 residues: Ephrin type-B receptor 3 (500 aa).

The Fibronectin type-III domain occupies Pro1 to Tyr64. At Pro1–Leu113 the chain is on the extracellular side. Residues His76 to Pro103 form a disordered region. Basic and acidic residues predominate over residues Lys91–Pro103. A helical membrane pass occupies residues Ile114–Val134. Residues Cys135 to Val500 lie on the Cytoplasmic side of the membrane. A Phosphotyrosine; by autocatalysis modification is found at Tyr168. Residues Val187–Leu450 enclose the Protein kinase domain. ATP-binding positions include Ile193–Val201 and Lys219. The Proton acceptor role is filled by Asp312. The SAM domain maps to Leu421–Val500. The PDZ-binding motif lies at Ile498–Val500.

Belongs to the protein kinase superfamily. Tyr protein kinase family. Ephrin receptor subfamily. In terms of assembly, heterotetramer upon binding of the ligand. The heterotetramer is composed of an ephrin dimer and a receptor dimer. Oligomerization is probably required to induce biological responses. Phosphorylated. Autophosphorylates upon ligand-binding. Autophosphorylation on Tyr-168 is required for interaction with SH2 domain-containing proteins. As to expression, widely expressed in the developing nervous system.

It localises to the cell membrane. The protein localises to the cell projection. It is found in the dendrite. The enzyme catalyses L-tyrosyl-[protein] + ATP = O-phospho-L-tyrosyl-[protein] + ADP + H(+). Its function is as follows. Receptor tyrosine kinase which binds promiscuously transmembrane ephrin-B family ligands residing on adjacent cells, leading to contact-dependent bidirectional signaling into neighboring cells. The signaling pathway downstream of the receptor is referred to as forward signaling while the signaling pathway downstream of the ephrin ligand is referred to as reverse signaling. Generally has an overlapping and redundant function with EPHB2. Like EPHB2, functions in axon guidance during development. In addition to its role in axon guidance also plays an important redundant role with other ephrin-B receptors in development and maturation of dendritic spines and the formation of excitatory synapses. May control other aspects of development through regulation of cell migration and positioning. May play a role in early pattern formation within the developing nervous system. The chain is Ephrin type-B receptor 3 (ephb3) from Danio rerio (Zebrafish).